The following is a 1007-amino-acid chain: Probable inorganic carbon transporter subunit DabA (1007 aa).

The Zn(2+) site is built by C442, D444, H696, and C711.

Belongs to the inorganic carbon transporter (TC 9.A.2) DabA family. In terms of assembly, forms a complex with DabB. It depends on Zn(2+) as a cofactor.

Its subcellular location is the cell inner membrane. Part of an energy-coupled inorganic carbon pump. The protein is Probable inorganic carbon transporter subunit DabA of Aquifex aeolicus (strain VF5).